The primary structure comprises 257 residues: NAD-capped RNA hydrolase NudC (257 aa).

Substrate-binding residues include Lys-25 and Arg-69. Cys-98 and Cys-101 together coordinate Zn(2+). Residue Glu-111 coordinates substrate. Zn(2+)-binding residues include Cys-116 and Cys-119. Tyr-124 is a binding site for substrate. The Nudix hydrolase domain occupies 125-248; sequence PQIAPCIIVA…TVARRLIEDT (124 aa). A divalent metal cation contacts are provided by Ala-158, Glu-174, and Glu-178. Positions 159-180 match the Nudix box motif; it reads GFVEVGETLEQAVAREVMEESG. 192–199 contributes to the substrate binding site; the sequence is QPWPFPQS. Glu-219 lines the a divalent metal cation pocket. Ala-241 serves as a coordination point for substrate.

It belongs to the Nudix hydrolase family. NudC subfamily. As to quaternary structure, homodimer. Mg(2+) is required as a cofactor. Requires Mn(2+) as cofactor. Zn(2+) serves as cofactor.

It catalyses the reaction a 5'-end NAD(+)-phospho-ribonucleoside in mRNA + H2O = a 5'-end phospho-adenosine-phospho-ribonucleoside in mRNA + beta-nicotinamide D-ribonucleotide + 2 H(+). The enzyme catalyses NAD(+) + H2O = beta-nicotinamide D-ribonucleotide + AMP + 2 H(+). It carries out the reaction NADH + H2O = reduced beta-nicotinamide D-ribonucleotide + AMP + 2 H(+). Functionally, mRNA decapping enzyme that specifically removes the nicotinamide adenine dinucleotide (NAD) cap from a subset of mRNAs by hydrolyzing the diphosphate linkage to produce nicotinamide mononucleotide (NMN) and 5' monophosphate mRNA. The NAD-cap is present at the 5'-end of some mRNAs and stabilizes RNA against 5'-processing. Has preference for mRNAs with a 5'-end purine. Catalyzes the hydrolysis of a broad range of dinucleotide pyrophosphates. In Shigella boydii serotype 18 (strain CDC 3083-94 / BS512), this protein is NAD-capped RNA hydrolase NudC.